The primary structure comprises 159 residues: 6,7-dimethyl-8-ribityllumazine synthase (159 aa).

5-amino-6-(D-ribitylamino)uracil contacts are provided by residues Tyr23, 58–60, and 82–84; these read AYE and TII. His90 serves as the catalytic Proton donor. 5-amino-6-(D-ribitylamino)uracil is bound at residue Ile115. Arg129 contributes to the (2S)-2-hydroxy-3-oxobutyl phosphate binding site.

Belongs to the DMRL synthase family. In terms of assembly, forms an icosahedral capsid composed of 60 subunits, arranged as a dodecamer of pentamers.

It catalyses the reaction (2S)-2-hydroxy-3-oxobutyl phosphate + 5-amino-6-(D-ribitylamino)uracil = 6,7-dimethyl-8-(1-D-ribityl)lumazine + phosphate + 2 H2O + H(+). It functions in the pathway cofactor biosynthesis; riboflavin biosynthesis; riboflavin from 2-hydroxy-3-oxobutyl phosphate and 5-amino-6-(D-ribitylamino)uracil: step 1/2. Its function is as follows. Catalyzes the formation of 6,7-dimethyl-8-ribityllumazine by condensation of 5-amino-6-(D-ribitylamino)uracil with 3,4-dihydroxy-2-butanone 4-phosphate. This is the penultimate step in the biosynthesis of riboflavin. This chain is 6,7-dimethyl-8-ribityllumazine synthase, found in Buchnera aphidicola subsp. Baizongia pistaciae (strain Bp).